Here is a 512-residue protein sequence, read N- to C-terminus: Bifunctional purine biosynthesis protein PurH (512 aa).

An MGS-like domain is found at 1 to 146 (MTIKRALISV…KNHQDVTVIV (146 aa)).

This sequence belongs to the PurH family.

The enzyme catalyses (6R)-10-formyltetrahydrofolate + 5-amino-1-(5-phospho-beta-D-ribosyl)imidazole-4-carboxamide = 5-formamido-1-(5-phospho-D-ribosyl)imidazole-4-carboxamide + (6S)-5,6,7,8-tetrahydrofolate. It carries out the reaction IMP + H2O = 5-formamido-1-(5-phospho-D-ribosyl)imidazole-4-carboxamide. It participates in purine metabolism; IMP biosynthesis via de novo pathway; 5-formamido-1-(5-phospho-D-ribosyl)imidazole-4-carboxamide from 5-amino-1-(5-phospho-D-ribosyl)imidazole-4-carboxamide (10-formyl THF route): step 1/1. The protein operates within purine metabolism; IMP biosynthesis via de novo pathway; IMP from 5-formamido-1-(5-phospho-D-ribosyl)imidazole-4-carboxamide: step 1/1. This Bacillus subtilis (strain 168) protein is Bifunctional purine biosynthesis protein PurH.